Reading from the N-terminus, the 198-residue chain is Zinc finger protein 41 (198 aa).

Positions 1–12 (MEKPATRKKKSQ) are enriched in basic residues. The tract at residues 1–56 (MEKPATRKKKSQAPKEEAGAQKATVKGEKTSKGKKATKKPRKPRRPRKEPVLSPED) is disordered. Basic and acidic residues predominate over residues 13-31 (APKEEAGAQKATVKGEKTS). The segment covering 32–47 (KGKKATKKPRKPRRPR) has biased composition (basic residues). 4 consecutive C2H2-type zinc fingers follow at residues 87–109 (YECG…QRVH), 115–137 (FKCD…QRIH), 143–165 (FKCG…QKTH), and 171–193 (YGCE…RKRH).

Belongs to the krueppel C2H2-type zinc-finger protein family. In terms of tissue distribution, predominantly in the spermatocytes and spermatids of testes. It is also expressed in the fetus and embryonic stem cells at lower levels.

Its subcellular location is the nucleus. Its function is as follows. A putative DNA-binding regulatory protein associated with meiosis in spermatogenesis. The protein is Zinc finger protein 41 (Zfp41) of Mus musculus (Mouse).